The chain runs to 371 residues: Dual-specificity RNA methyltransferase RlmN (371 aa).

Glu97 (proton acceptor) is an active-site residue. The Radical SAM core domain occupies 103–341 (DGDRATLCVS…VTVRTTRGDD (239 aa)). Cys110 and Cys346 are oxidised to a cystine. Residues Cys117, Cys121, and Cys124 each contribute to the [4Fe-4S] cluster site. S-adenosyl-L-methionine is bound by residues 171–172 (GE), Ser203, 225–227 (SLH), and Asn303. The S-methylcysteine intermediate role is filled by Cys346.

The protein belongs to the radical SAM superfamily. RlmN family. [4Fe-4S] cluster is required as a cofactor.

Its subcellular location is the cytoplasm. It catalyses the reaction adenosine(2503) in 23S rRNA + 2 reduced [2Fe-2S]-[ferredoxin] + 2 S-adenosyl-L-methionine = 2-methyladenosine(2503) in 23S rRNA + 5'-deoxyadenosine + L-methionine + 2 oxidized [2Fe-2S]-[ferredoxin] + S-adenosyl-L-homocysteine. The enzyme catalyses adenosine(37) in tRNA + 2 reduced [2Fe-2S]-[ferredoxin] + 2 S-adenosyl-L-methionine = 2-methyladenosine(37) in tRNA + 5'-deoxyadenosine + L-methionine + 2 oxidized [2Fe-2S]-[ferredoxin] + S-adenosyl-L-homocysteine. Its function is as follows. Specifically methylates position 2 of adenine 2503 in 23S rRNA and position 2 of adenine 37 in tRNAs. m2A2503 modification seems to play a crucial role in the proofreading step occurring at the peptidyl transferase center and thus would serve to optimize ribosomal fidelity. The protein is Dual-specificity RNA methyltransferase RlmN of Marinomonas sp. (strain MWYL1).